A 455-amino-acid chain; its full sequence is Bifunctional protein GlmU (455 aa).

Positions 1–225 are pyrophosphorylase; sequence MNIVILAAGL…EWETLGVNSK (225 aa). UDP-N-acetyl-alpha-D-glucosamine-binding positions include 6–9, K20, Q71, 76–77, 98–100, G135, E150, N165, and N223; these read LAAG, GT, and YGD. Mg(2+) is bound at residue D100. N223 lines the Mg(2+) pocket. Residues 226 to 246 are linker; that stretch reads VQLAELERIHQRNLAQQLLED. The N-acetyltransferase stretch occupies residues 247–455; it reads GVTLIDPARI…QRPVKQKKDA (209 aa). R329 and K347 together coordinate UDP-N-acetyl-alpha-D-glucosamine. H359 serves as the catalytic Proton acceptor. Y362 and N373 together coordinate UDP-N-acetyl-alpha-D-glucosamine. Acetyl-CoA-binding positions include A376, 382–383, S401, A419, and R436; that span reads NY.

In the N-terminal section; belongs to the N-acetylglucosamine-1-phosphate uridyltransferase family. It in the C-terminal section; belongs to the transferase hexapeptide repeat family. Homotrimer. The cofactor is Mg(2+).

Its subcellular location is the cytoplasm. The catalysed reaction is alpha-D-glucosamine 1-phosphate + acetyl-CoA = N-acetyl-alpha-D-glucosamine 1-phosphate + CoA + H(+). It catalyses the reaction N-acetyl-alpha-D-glucosamine 1-phosphate + UTP + H(+) = UDP-N-acetyl-alpha-D-glucosamine + diphosphate. The protein operates within nucleotide-sugar biosynthesis; UDP-N-acetyl-alpha-D-glucosamine biosynthesis; N-acetyl-alpha-D-glucosamine 1-phosphate from alpha-D-glucosamine 6-phosphate (route II): step 2/2. It functions in the pathway nucleotide-sugar biosynthesis; UDP-N-acetyl-alpha-D-glucosamine biosynthesis; UDP-N-acetyl-alpha-D-glucosamine from N-acetyl-alpha-D-glucosamine 1-phosphate: step 1/1. It participates in bacterial outer membrane biogenesis; LPS lipid A biosynthesis. Functionally, catalyzes the last two sequential reactions in the de novo biosynthetic pathway for UDP-N-acetylglucosamine (UDP-GlcNAc). The C-terminal domain catalyzes the transfer of acetyl group from acetyl coenzyme A to glucosamine-1-phosphate (GlcN-1-P) to produce N-acetylglucosamine-1-phosphate (GlcNAc-1-P), which is converted into UDP-GlcNAc by the transfer of uridine 5-monophosphate (from uridine 5-triphosphate), a reaction catalyzed by the N-terminal domain. The chain is Bifunctional protein GlmU from Ralstonia nicotianae (strain ATCC BAA-1114 / GMI1000) (Ralstonia solanacearum).